An 882-amino-acid chain; its full sequence is Valine--tRNA ligase (882 aa).

The 'HIGH' region motif lies at 45–55; sequence PNVTGSLHIGH. A 'KMSKS' region motif is present at residues 525 to 529; the sequence is KFSKS. Lys528 serves as a coordination point for ATP. A coiled-coil region spans residues 812 to 881; it reads EGLIDVAKEK…VLKKGIQNLA (70 aa).

Belongs to the class-I aminoacyl-tRNA synthetase family. ValS type 1 subfamily. As to quaternary structure, monomer.

Its subcellular location is the cytoplasm. The enzyme catalyses tRNA(Val) + L-valine + ATP = L-valyl-tRNA(Val) + AMP + diphosphate. In terms of biological role, catalyzes the attachment of valine to tRNA(Val). As ValRS can inadvertently accommodate and process structurally similar amino acids such as threonine, to avoid such errors, it has a 'posttransfer' editing activity that hydrolyzes mischarged Thr-tRNA(Val) in a tRNA-dependent manner. The protein is Valine--tRNA ligase of Leptospira interrogans serogroup Icterohaemorrhagiae serovar copenhageni (strain Fiocruz L1-130).